The primary structure comprises 403 residues: NADH-quinone oxidoreductase subunit D (403 aa).

This sequence belongs to the complex I 49 kDa subunit family. NDH-1 is composed of 14 different subunits. Subunits NuoB, C, D, E, F, and G constitute the peripheral sector of the complex.

Its subcellular location is the cell inner membrane. It carries out the reaction a quinone + NADH + 5 H(+)(in) = a quinol + NAD(+) + 4 H(+)(out). Functionally, NDH-1 shuttles electrons from NADH, via FMN and iron-sulfur (Fe-S) centers, to quinones in the respiratory chain. The immediate electron acceptor for the enzyme in this species is believed to be ubiquinone. Couples the redox reaction to proton translocation (for every two electrons transferred, four hydrogen ions are translocated across the cytoplasmic membrane), and thus conserves the redox energy in a proton gradient. This is NADH-quinone oxidoreductase subunit D from Erythrobacter litoralis (strain HTCC2594).